A 324-amino-acid chain; its full sequence is Appendage-associated protein (324 aa).

An N-terminal signal peptide occupies residues 1-32; the sequence is MGCPVSRGGSPGCGRRIAEELRLAEDARLRLA. Residues 195 to 255 adopt a coiled-coil conformation; the sequence is IAQAKEIAQA…AADKLQALGK (61 aa).

The protein resides in the secreted. Functionally, associates with actin filament appendages that are formed in the inclusion appendages of the parasitophorous vacuole during infection of the host erythrocyte. The chain is Appendage-associated protein (aaaP1) from Anaplasma marginale (strain Florida).